Reading from the N-terminus, the 352-residue chain is N-acetyl-gamma-glutamyl-phosphate reductase 1 (352 aa).

This sequence belongs to the NAGSA dehydrogenase family. Type 1 subfamily.

It is found in the cytoplasm. It catalyses the reaction N-acetyl-L-glutamate 5-semialdehyde + phosphate + NADP(+) = N-acetyl-L-glutamyl 5-phosphate + NADPH + H(+). It functions in the pathway amino-acid biosynthesis; L-arginine biosynthesis; N(2)-acetyl-L-ornithine from L-glutamate: step 3/4. In terms of biological role, catalyzes the NADPH-dependent reduction of N-acetyl-5-glutamyl phosphate to yield N-acetyl-L-glutamate 5-semialdehyde. The sequence is that of N-acetyl-gamma-glutamyl-phosphate reductase 1 from Nostoc sp. (strain PCC 7120 / SAG 25.82 / UTEX 2576).